The following is a 335-amino-acid chain: tRNA N6-adenosine threonylcarbamoyltransferase (335 aa).

Positions 109, 113, and 130 each coordinate a divalent metal cation. Residues 130–134, Asp162, Gly177, Glu181, and Asn266 each bind substrate; that span reads YVSGG. Residue Asp294 participates in a divalent metal cation binding.

The protein belongs to the KAE1 / TsaD family. Component of the EKC/KEOPS complex composed of at least tp53rk, tprkb, osgep and lage3; the whole complex dimerizes. A divalent metal cation is required as a cofactor.

The protein resides in the cytoplasm. The protein localises to the nucleus. The catalysed reaction is L-threonylcarbamoyladenylate + adenosine(37) in tRNA = N(6)-L-threonylcarbamoyladenosine(37) in tRNA + AMP + H(+). In terms of biological role, component of the EKC/KEOPS complex that is required for the formation of a threonylcarbamoyl group on adenosine at position 37 (t(6)A37) in tRNAs that read codons beginning with adenine. The complex is probably involved in the transfer of the threonylcarbamoyl moiety of threonylcarbamoyl-AMP (TC-AMP) to the N6 group of A37. Osgep likely plays a direct catalytic role in this reaction, but requires other protein(s) of the complex to fulfill this activity. The sequence is that of tRNA N6-adenosine threonylcarbamoyltransferase from Xenopus laevis (African clawed frog).